The primary structure comprises 403 residues: Alkaline protease 1 (403 aa).

The first 21 residues, 1–21 (MQSIKRTLLLLGAVLPAVLAG), serve as a signal peptide directing secretion. The propeptide occupies 22–121 (PIFPHRRAPT…VEEDQVWHLF (100 aa)). An Inhibitor I9 domain is found at 36–120 (KYIVTFKSDV…AVEEDQVWHL (85 aa)). Residues 130-403 (PWGLGSISHK…PNLLAYNGNA (274 aa)) form the Peptidase S8 domain. Catalysis depends on charge relay system residues aspartate 162 and histidine 193. 2 N-linked (GlcNAc...) asparagine glycosylation sites follow: asparagine 253 and asparagine 309. The active-site Charge relay system is the serine 349.

The protein belongs to the peptidase S8 family.

It is found in the secreted. The catalysed reaction is Hydrolysis of proteins with broad specificity, and of Bz-Arg-OEt &gt; Ac-Tyr-OEt. Does not hydrolyze peptide amides.. Its function is as follows. Secreted alkaline protease that allows assimilation of proteinaceous substrates. In Aspergillus flavus, this protein is Alkaline protease 1 (alp1).